The primary structure comprises 100 residues: Urease subunit gamma (100 aa).

It belongs to the urease gamma subunit family. Heterotrimer of UreA (gamma), UreB (beta) and UreC (alpha) subunits. Three heterotrimers associate to form the active enzyme.

The protein localises to the cytoplasm. The enzyme catalyses urea + 2 H2O + H(+) = hydrogencarbonate + 2 NH4(+). Its pathway is nitrogen metabolism; urea degradation; CO(2) and NH(3) from urea (urease route): step 1/1. This Pseudomonas syringae pv. syringae (strain B728a) protein is Urease subunit gamma.